Here is a 346-residue protein sequence, read N- to C-terminus: tRNA N6-adenosine threonylcarbamoyltransferase (346 aa).

Fe cation contacts are provided by His111 and His115. Residues 134–138, Asp167, Gly180, and Asn279 each bind substrate; that span reads LVSGG. Asp307 is a binding site for Fe cation.

This sequence belongs to the KAE1 / TsaD family. Fe(2+) serves as cofactor.

It localises to the cytoplasm. It carries out the reaction L-threonylcarbamoyladenylate + adenosine(37) in tRNA = N(6)-L-threonylcarbamoyladenosine(37) in tRNA + AMP + H(+). Required for the formation of a threonylcarbamoyl group on adenosine at position 37 (t(6)A37) in tRNAs that read codons beginning with adenine. Is involved in the transfer of the threonylcarbamoyl moiety of threonylcarbamoyl-AMP (TC-AMP) to the N6 group of A37, together with TsaE and TsaB. TsaD likely plays a direct catalytic role in this reaction. This chain is tRNA N6-adenosine threonylcarbamoyltransferase, found in Burkholderia mallei (strain ATCC 23344).